Reading from the N-terminus, the 222-residue chain is Coiled-coil domain-containing protein 70 (222 aa).

Residues 129 to 153 (NALWERDRNLLQEDKALWEEEKALW) adopt a coiled-coil conformation.

In Homo sapiens (Human), this protein is Coiled-coil domain-containing protein 70.